The chain runs to 365 residues: UDP-N-acetylglucosamine--N-acetylmuramyl-(pentapeptide) pyrophosphoryl-undecaprenol N-acetylglucosamine transferase (365 aa).

Residues 19-21, asparagine 131, arginine 170, serine 201, isoleucine 255, 274-279, and glutamine 300 contribute to the UDP-N-acetyl-alpha-D-glucosamine site; these read TGG and ALTVTE.

This sequence belongs to the glycosyltransferase 28 family. MurG subfamily.

Its subcellular location is the cell inner membrane. The enzyme catalyses di-trans,octa-cis-undecaprenyl diphospho-N-acetyl-alpha-D-muramoyl-L-alanyl-D-glutamyl-meso-2,6-diaminopimeloyl-D-alanyl-D-alanine + UDP-N-acetyl-alpha-D-glucosamine = di-trans,octa-cis-undecaprenyl diphospho-[N-acetyl-alpha-D-glucosaminyl-(1-&gt;4)]-N-acetyl-alpha-D-muramoyl-L-alanyl-D-glutamyl-meso-2,6-diaminopimeloyl-D-alanyl-D-alanine + UDP + H(+). Its pathway is cell wall biogenesis; peptidoglycan biosynthesis. Functionally, cell wall formation. Catalyzes the transfer of a GlcNAc subunit on undecaprenyl-pyrophosphoryl-MurNAc-pentapeptide (lipid intermediate I) to form undecaprenyl-pyrophosphoryl-MurNAc-(pentapeptide)GlcNAc (lipid intermediate II). The polypeptide is UDP-N-acetylglucosamine--N-acetylmuramyl-(pentapeptide) pyrophosphoryl-undecaprenol N-acetylglucosamine transferase (Acinetobacter baumannii (strain AB307-0294)).